Reading from the N-terminus, the 204-residue chain is High frequency lysogenization protein HflD homolog (204 aa).

It belongs to the HflD family.

Its subcellular location is the cytoplasm. The protein localises to the cell inner membrane. This is High frequency lysogenization protein HflD homolog from Shewanella woodyi (strain ATCC 51908 / MS32).